Consider the following 283-residue polypeptide: Orotidine 5'-phosphate decarboxylase (283 aa).

The active-site Proton donor is lysine 97.

Belongs to the OMP decarboxylase family. Type 2 subfamily.

The enzyme catalyses orotidine 5'-phosphate + H(+) = UMP + CO2. It participates in pyrimidine metabolism; UMP biosynthesis via de novo pathway; UMP from orotate: step 2/2. The sequence is that of Orotidine 5'-phosphate decarboxylase from Clostridium botulinum (strain Loch Maree / Type A3).